Here is a 414-residue protein sequence, read N- to C-terminus: Na(+)-translocating NADH-quinone reductase subunit B (414 aa).

The next 3 membrane-spanning stretches (helical) occupy residues 56–76, 129–149, and 164–184; these read IMIM…YNAG, FLPI…LFCM, and ILFA…LGIT. Thr236 is modified (FMN phosphoryl threonine). Transmembrane regions (helical) follow at residues 268-288, 297-317, 325-345, 358-378, and 381-401; these read IPGS…AMIV, IIAG…VIGS, MPWH…FMAT, WWYG…NPAY, and GMML…HVVI.

The protein belongs to the NqrB/RnfD family. Composed of six subunits; NqrA, NqrB, NqrC, NqrD, NqrE and NqrF. It depends on FMN as a cofactor.

Its subcellular location is the cell inner membrane. The enzyme catalyses a ubiquinone + n Na(+)(in) + NADH + H(+) = a ubiquinol + n Na(+)(out) + NAD(+). Its activity is regulated as follows. This reaction is tightly coupled to the Na(+) pumping activity and specifically requires Na(+) for activity. Inhibited by korormicin and 2-N-heptyl-4-hydroxyquinoline N-oxide (HQNO). In terms of biological role, NQR complex catalyzes the reduction of ubiquinone-1 to ubiquinol by two successive reactions, coupled with the transport of Na(+) ions from the cytoplasm to the periplasm. NqrA to NqrE are probably involved in the second step, the conversion of ubisemiquinone to ubiquinol. This is Na(+)-translocating NADH-quinone reductase subunit B from Vibrio alginolyticus.